The primary structure comprises 122 residues: Acidic phospholipase A2 Tpu-E6b (122 aa).

Intrachain disulfides connect Cys26-Cys115, Cys28-Cys44, Cys43-Cys95, Cys49-Cys122, Cys50-Cys88, Cys57-Cys81, and Cys75-Cys86. Ca(2+) contacts are provided by Tyr27, Gly29, and Gly31. Residue His47 is part of the active site. Asp48 serves as a coordination point for Ca(2+). The active site involves Asp89.

Monomer. Ca(2+) is required as a cofactor. In terms of tissue distribution, expressed by the venom gland.

The protein localises to the secreted. It catalyses the reaction a 1,2-diacyl-sn-glycero-3-phosphocholine + H2O = a 1-acyl-sn-glycero-3-phosphocholine + a fatty acid + H(+). Snake venom phospholipase A2 (PLA2) that weakly inhibits ADP-induced platelet aggregation when tested on platelet rich plasma from human and rabbit blood (15-25% of inhibition at 5-10 ug of enzyme). Exhibits moderate hydrolytic activities toward L-dipalmitoyl phosphatidylcholine. PLA2 catalyzes the calcium-dependent hydrolysis of the 2-acyl groups in 3-sn-phosphoglycerides. The polypeptide is Acidic phospholipase A2 Tpu-E6b (Craspedocephalus puniceus (Flat-nosed pitviper)).